The chain runs to 334 residues: Fructose-1,6-bisphosphatase class 1 (334 aa).

4 residues coordinate Mg(2+): glutamate 90, aspartate 113, leucine 115, and aspartate 116. Residues 116–119 (DGSS), asparagine 209, tyrosine 242, and lysine 272 each bind substrate. Mg(2+) is bound at residue glutamate 278.

This sequence belongs to the FBPase class 1 family. In terms of assembly, homotetramer. The cofactor is Mg(2+).

The protein resides in the cytoplasm. It catalyses the reaction beta-D-fructose 1,6-bisphosphate + H2O = beta-D-fructose 6-phosphate + phosphate. It functions in the pathway carbohydrate biosynthesis; gluconeogenesis. This Haemophilus ducreyi (strain 35000HP / ATCC 700724) protein is Fructose-1,6-bisphosphatase class 1.